A 370-amino-acid chain; its full sequence is Protein SUPPRESSOR OF NIM1 1 (370 aa).

An F-box domain is found at 1–43 (MALPWELEEDILSRLPPISLVRFRTVSKHWNSLFNDKTFINNH).

As to expression, ubiquitous, at low levels.

Functionally, negatively regulates a plant defense signaling pathway which is independent of salicylic acid (SA) and systemic acquired resistance (SAR). Confers sensitivity to P.syringae and P.parasitica. The sequence is that of Protein SUPPRESSOR OF NIM1 1 (SON1) from Arabidopsis thaliana (Mouse-ear cress).